Reading from the N-terminus, the 586-residue chain is Methionine--tRNA ligase, mitochondrial (586 aa).

The transit peptide at 1-46 (MLRQCARWVLTRTRFGRGCRRYGSCSPSASGDAGEARAYFTTPIFY) directs the protein to the mitochondrion. The short motif at 45 to 55 (FYVNAAPHIGH) is the 'HIGH' region element. The 'KMSKS' region motif lies at 340–344 (KMSKS). Position 343 (Lys-343) interacts with ATP.

The protein belongs to the class-I aminoacyl-tRNA synthetase family.

It localises to the mitochondrion matrix. The enzyme catalyses tRNA(Met) + L-methionine + ATP = L-methionyl-tRNA(Met) + AMP + diphosphate. This chain is Methionine--tRNA ligase, mitochondrial (Mars2), found in Mus musculus (Mouse).